The sequence spans 1392 residues: DNA-directed RNA polymerase subunit beta (1392 aa).

It belongs to the RNA polymerase beta chain family. The RNAP catalytic core consists of 2 alpha, 1 beta, 1 beta' and 1 omega subunit. When a sigma factor is associated with the core the holoenzyme is formed, which can initiate transcription.

It carries out the reaction RNA(n) + a ribonucleoside 5'-triphosphate = RNA(n+1) + diphosphate. Its function is as follows. DNA-dependent RNA polymerase catalyzes the transcription of DNA into RNA using the four ribonucleoside triphosphates as substrates. The protein is DNA-directed RNA polymerase subunit beta of Neisseria gonorrhoeae (strain ATCC 700825 / FA 1090).